The chain runs to 193 residues: UPF0314 protein Pden_1914 (193 aa).

The next 4 membrane-spanning stretches (helical) occupy residues Ala-13 to Gly-33, Trp-62 to Ala-82, Leu-148 to Ile-168, and Leu-172 to Ala-192.

The protein belongs to the UPF0314 family.

The protein localises to the cell membrane. The protein is UPF0314 protein Pden_1914 of Paracoccus denitrificans (strain Pd 1222).